The following is a 364-amino-acid chain: tRNA 2-selenouridine synthase (364 aa).

The Rhodanese domain maps to 14–136; it reads VLNNTPLIDV…AFRNWLMQET (123 aa). Cysteine 97 serves as the catalytic S-selanylcysteine intermediate.

This sequence belongs to the SelU family. In terms of assembly, monomer.

It catalyses the reaction 5-methylaminomethyl-2-thiouridine(34) in tRNA + selenophosphate + (2E)-geranyl diphosphate + H2O + H(+) = 5-methylaminomethyl-2-selenouridine(34) in tRNA + (2E)-thiogeraniol + phosphate + diphosphate. The enzyme catalyses 5-methylaminomethyl-2-thiouridine(34) in tRNA + (2E)-geranyl diphosphate = 5-methylaminomethyl-S-(2E)-geranyl-thiouridine(34) in tRNA + diphosphate. The catalysed reaction is 5-methylaminomethyl-S-(2E)-geranyl-thiouridine(34) in tRNA + selenophosphate + H(+) = 5-methylaminomethyl-2-(Se-phospho)selenouridine(34) in tRNA + (2E)-thiogeraniol. It carries out the reaction 5-methylaminomethyl-2-(Se-phospho)selenouridine(34) in tRNA + H2O = 5-methylaminomethyl-2-selenouridine(34) in tRNA + phosphate. Its function is as follows. Involved in the post-transcriptional modification of the uridine at the wobble position (U34) of tRNA(Lys), tRNA(Glu) and tRNA(Gln). Catalyzes the conversion of 2-thiouridine (S2U-RNA) to 2-selenouridine (Se2U-RNA). Acts in a two-step process involving geranylation of 2-thiouridine (S2U) to S-geranyl-2-thiouridine (geS2U) and subsequent selenation of the latter derivative to 2-selenouridine (Se2U) in the tRNA chain. This chain is tRNA 2-selenouridine synthase, found in Sulfurovum sp. (strain NBC37-1).